We begin with the raw amino-acid sequence, 98 residues long: NADH-quinone oxidoreductase subunit K (98 aa).

The next 3 membrane-spanning stretches (helical) occupy residues 1 to 21, 27 to 47, and 59 to 79; these read MGHLLGLGAVLFCISLAGIFL, IVLLMSIELMLLSVNVNFIAF, and FVFFILTVAAAEAAIGLAILV.

It belongs to the complex I subunit 4L family. As to quaternary structure, NDH-1 is composed of 14 different subunits. Subunits NuoA, H, J, K, L, M, N constitute the membrane sector of the complex.

Its subcellular location is the cell inner membrane. It carries out the reaction a quinone + NADH + 5 H(+)(in) = a quinol + NAD(+) + 4 H(+)(out). Its function is as follows. NDH-1 shuttles electrons from NADH, via FMN and iron-sulfur (Fe-S) centers, to quinones in the respiratory chain. The immediate electron acceptor for the enzyme in this species is believed to be ubiquinone. Couples the redox reaction to proton translocation (for every two electrons transferred, four hydrogen ions are translocated across the cytoplasmic membrane), and thus conserves the redox energy in a proton gradient. The protein is NADH-quinone oxidoreductase subunit K of Xanthomonas oryzae pv. oryzae (strain PXO99A).